A 216-amino-acid polypeptide reads, in one-letter code: 4-hydroxy-tetrahydrodipicolinate reductase (216 aa).

NAD(+) is bound by residues 9-12, 71-73, and 95-98; these read SGRM, GTT, and AYNF. His127 serves as the catalytic Proton donor/acceptor. His128 contributes to the (S)-2,3,4,5-tetrahydrodipicolinate binding site. NAD(+) is bound at residue Lys131. Lys131 acts as the Proton donor in catalysis. 137-138 is a (S)-2,3,4,5-tetrahydrodipicolinate binding site; that stretch reads GT.

The protein belongs to the DapB family. Homotetramer.

Its subcellular location is the cytoplasm. It carries out the reaction (S)-2,3,4,5-tetrahydrodipicolinate + NAD(+) + H2O = (2S,4S)-4-hydroxy-2,3,4,5-tetrahydrodipicolinate + NADH + H(+). It catalyses the reaction (S)-2,3,4,5-tetrahydrodipicolinate + NADP(+) + H2O = (2S,4S)-4-hydroxy-2,3,4,5-tetrahydrodipicolinate + NADPH + H(+). Its pathway is amino-acid biosynthesis; L-lysine biosynthesis via DAP pathway; (S)-tetrahydrodipicolinate from L-aspartate: step 4/4. Is inhibited by high concentrations of NADH. In terms of biological role, catalyzes the conversion of 4-hydroxy-tetrahydrodipicolinate (HTPA) to tetrahydrodipicolinate. Uses NADPH as a reductant with much more efficiency than NADH. This chain is 4-hydroxy-tetrahydrodipicolinate reductase, found in Thermotoga maritima (strain ATCC 43589 / DSM 3109 / JCM 10099 / NBRC 100826 / MSB8).